The primary structure comprises 422 residues: Acylglycerol kinase, mitochondrial (422 aa).

N6-acetyllysine is present on Lys6. The interval 15–31 is hydrophobic; it reads TTAGLCLLTWGGHWLYG. A DAGKc domain is found at 58 to 199; that stretch reads AQVKKATVFL…LDVLQIKGEK (142 aa). The segment at 249 to 271 is disordered; sequence QASISYTGPTERPPNEPEETPVQ.

The protein belongs to the AGK family. As to quaternary structure, component of the TIM22 complex, which core is composed of TIMM22, associated with TIMM10 (TIMM10A and/or TIMM10B), TIMM9, AGK and TIMM29. Interacts with SMIM26. It depends on Mg(2+) as a cofactor. In terms of tissue distribution, highly expressed in muscle, heart, kidney and brain.

The protein resides in the mitochondrion inner membrane. It is found in the mitochondrion intermembrane space. It catalyses the reaction a monoacylglycerol + ATP = a monoacyl-sn-glycero-3-phosphate + ADP + H(+). It carries out the reaction a 1,2-diacyl-sn-glycerol + ATP = a 1,2-diacyl-sn-glycero-3-phosphate + ADP + H(+). The catalysed reaction is an N-acylsphing-4-enine + ATP = an N-acylsphing-4-enine 1-phosphate + ADP + H(+). The enzyme catalyses 1-(9Z-octadecenoyl)-sn-glycerol + ATP = 1-(9Z-octadecenoyl)-sn-glycero-3-phosphate + ADP + H(+). It catalyses the reaction 1,2-di-(9Z-octadecenoyl)-sn-glycerol + ATP = 1,2-di-(9Z-octadecenoyl)-sn-glycero-3-phosphate + ADP + H(+). It carries out the reaction a 1-acyl-sn-glycerol + ATP = a 1-acyl-sn-glycero-3-phosphate + ADP + H(+). The catalysed reaction is 1-hexadecanoyl-sn-glycerol + ATP = 1-hexadecanoyl-sn-glycero-3-phosphate + ADP + H(+). The enzyme catalyses a 2-acylglycerol + ATP = a 2-acyl-sn-glycerol 3-phosphate + ADP + H(+). It catalyses the reaction 2-(5Z,8Z,11Z,14Z-eicosatetraenoyl)-glycerol + ATP = 2-(5Z,8Z,11Z,14Z-eicosatetraenoyl)-sn-glycero-3-phosphate + ADP + H(+). It carries out the reaction 1-(5Z,8Z,11Z,14Z-eicosatetraenoyl)-sn-glycerol + ATP = 1-(5Z,8Z,11Z,14Z-eicosatetraenoyl)-sn-glycero-3-phosphate + ADP + H(+). The catalysed reaction is N-(hexanoyl)sphing-4-enine + ATP = N-hexanoylsphing-4-enine 1-phosphate + ADP + H(+). The protein operates within lipid metabolism; glycerolipid metabolism. In terms of biological role, lipid kinase that can phosphorylate both monoacylglycerol and diacylglycerol to form lysophosphatidic acid (LPA) and phosphatidic acid (PA), respectively. Does not phosphorylate sphingosine. Phosphorylates ceramide. Phosphorylates 1,2-dioleoylglycerol more rapidly than 2,3-dioleoylglycerol. Independently of its lipid kinase activity, acts as a component of the TIM22 complex. The TIM22 complex mediates the import and insertion of multi-pass transmembrane proteins into the mitochondrial inner membrane by forming a twin-pore translocase that uses the membrane potential as the external driving force. In the TIM22 complex, required for the import of a subset of metabolite carriers into mitochondria, such as ANT1/SLC25A4 and SLC25A24, while it is not required for the import of TIMM23. Overexpression increases the formation and secretion of LPA, resulting in transactivation of EGFR and activation of the downstream MAPK signaling pathway, leading to increased cell growth. This is Acylglycerol kinase, mitochondrial from Homo sapiens (Human).